We begin with the raw amino-acid sequence, 538 residues long: Coiled-coil domain-containing protein 8 (538 aa).

Residues 58–128 form a disordered region; that stretch reads IMEKSTPHPP…QGPRRGKKVR (71 aa). A compositionally biased stretch (basic residues) spans 119 to 128; it reads QGPRRGKKVR. Residues S142, S146, and S261 each carry the phosphoserine modification. The interval 213-473 is disordered; that stretch reads WAPRAGPGVG…GTAPGARARK (261 aa). Over residues 301-313 the composition is skewed to basic and acidic residues; it reads DSQREEAIADQRE. The segment covering 321–332 has biased composition (low complexity); sequence AGAPADQGAEAA. The stretch at 349–366 forms a coiled coil; the sequence is AEEGAEAADNQREEAADN. Basic and acidic residues-rich tracts occupy residues 357-373, 381-392, and 405-419; these read DNQR…EAPA, DNHREEAADNQR, and DNQR…RERA. 2 stretches are compositionally biased toward low complexity: residues 428–438 and 458–469; these read QRAQARAGQRA and AAQGTTGTAPGA. Residues 500–506 carry the PxLPxI/L motif; mediates interaction with ANKRA2 motif; sequence PRLPTLP. Residues 514-535 adopt a coiled-coil conformation; that stretch reads EARNLRVLRAEARAEAEQGEQE.

In terms of assembly, component of the 3M complex, composed of core components CUL7, CCDC8 and OBSL1. Interacts (via PxLPxI/L motif) with ANKRA2 (via ankyrin repeats); may link the 3M complex to histone deacetylases including HDAC4 and HDAC5. As to expression, widely expressed with low levels in spleen, skeletal muscle, small intestine, kidney and liver.

Its subcellular location is the cytoplasm. It is found in the cytoskeleton. It localises to the microtubule organizing center. The protein localises to the centrosome. Its function is as follows. Core component of the 3M complex, a complex required to regulate microtubule dynamics and genome integrity. It is unclear how the 3M complex regulates microtubules, it could act by controlling the level of a microtubule stabilizer. Required for localization of CUL7 to the centrosome. The chain is Coiled-coil domain-containing protein 8 (CCDC8) from Homo sapiens (Human).